We begin with the raw amino-acid sequence, 400 residues long: Methylthioribose kinase (400 aa).

ATP contacts are provided by residues Asn40, Lys57, and 111–113 (EDL). Asp229 serves as a coordination point for substrate. An ATP-binding site is contributed by 246 to 248 (DAE). Position 344 (Arg344) interacts with substrate.

Belongs to the methylthioribose kinase family. As to quaternary structure, homodimer.

It carries out the reaction 5-(methylsulfanyl)-D-ribose + ATP = 5-(methylsulfanyl)-alpha-D-ribose 1-phosphate + ADP + H(+). Its pathway is amino-acid biosynthesis; L-methionine biosynthesis via salvage pathway; S-methyl-5-thio-alpha-D-ribose 1-phosphate from S-methyl-5'-thioadenosine (hydrolase route): step 2/2. In terms of biological role, catalyzes the phosphorylation of methylthioribose into methylthioribose-1-phosphate. The chain is Methylthioribose kinase from Pectobacterium carotovorum subsp. carotovorum (strain PC1).